Here is a 2462-residue protein sequence, read N- to C-terminus: Serine/threonine-protein kinase Wnk (2462 aa).

Disordered stretches follow at residues 18 to 133, 146 to 248, and 365 to 461; these read NRAR…ASKS, NTLP…KSSS, and EDDV…DDDP. 2 stretches are compositionally biased toward polar residues: residues 29–58 and 65–78; these read DGTT…NIQK and NRSA…NPTS. The span at 94-124 shows a compositional bias: low complexity; the sequence is TLSAHTSTSSTTSIQSSPIEPASSLPTLNTT. Polar residues predominate over residues 146 to 155; sequence NTLPGKTASS. 3 stretches are compositionally biased toward basic and acidic residues: residues 190–205, 237–247, and 396–413; these read QSRE…KIEP, DTKKMEARKSS, and QSEK…KAES. Residues 414 to 452 are compositionally biased toward low complexity; sequence SEASAEEAAVTGSSTDASASPLPSTSLVSTTSSATSITK. One can recognise a Protein kinase domain in the interval 471–729; it reads FKYDKEVGRG…CNELLESEFF (259 aa). ATP is bound by residues serine 481, 551–554, and lysine 601; that span reads TELM. Aspartate 618 functions as the Proton acceptor in the catalytic mechanism. Phosphoserine; by autocatalysis occurs at positions 628 and 632. Disordered regions lie at residues 844–873, 893–923, and 1006–1055; these read LQKQ…DGVK, LALS…QPVQ, and PQQQ…LQQQ. Residues 855–870 show a composition bias toward acidic residues; the sequence is VDEDEEEEEESEDEED. A compositionally biased stretch (polar residues) spans 893–918; that stretch reads LALSTNSVEPQQLSTRSNTSIPNSGI. Low complexity-rich tracts occupy residues 1006–1034 and 1041–1055; these read PQQQ…QPQT and HEQQ…LQQQ. A coiled-coil region spans residues 1142-1178; it reads AQHQLQQLQQQQLQQQQLQQQQQIQQQQLQQQQLQQQ. Residues 1236-1251 are compositionally biased toward polar residues; that stretch reads QGGQVTLSDAQQQQHP. Disordered stretches follow at residues 1236–1256, 1322–1382, 1418–1465, 1554–1578, 1615–1699, 1762–1790, 1828–1895, 1929–1966, and 2122–2229; these read QGGQ…FSAV, QQQQ…EQIS, GALE…PKLS, LTRQ…SDIT, NIPN…KDKK, DTSE…GNQG, QASP…SVGS, HEKQ…SINQ, and THVQ…FIQS. A compositionally biased stretch (basic residues) spans 1559-1568; that stretch reads STFRSHQRHR. Positions 1627–1641 are enriched in low complexity; that stretch reads STPPTTTSTMSSSST. The segment covering 1642–1674 has biased composition (polar residues); that stretch reads ASRDAPNSSNDVTIGSGSVSRKTSTASEYTSLS. 3 stretches are compositionally biased toward polar residues: residues 1828-1852, 1861-1894, and 1943-1966; these read QASP…TKPN, SVGQ…NSVG, and SATS…SINQ. The span at 2125 to 2136 shows a compositional bias: low complexity; the sequence is QQPSNLQPQQQS. Over residues 2137–2160 the composition is skewed to polar residues; the sequence is VHPNMTQQPQQTPLNGHPSMVNTL. Residues 2161–2211 are compositionally biased toward low complexity; the sequence is QQQPPQQSLPMQTIQSQQQQHNQMPIISQQQQQQILMQQQQQQGSQQGSQQ. The span at 2212 to 2229 shows a compositional bias: polar residues; that stretch reads FNLPGTQQTHPQHQFIQS.

The protein belongs to the protein kinase superfamily. Ser/Thr protein kinase family. WNK subfamily. It depends on Mg(2+) as a cofactor. Autophosphorylated. Autophosphorylation at Ser-628 and Ser-632 promotes its activity.

Its subcellular location is the cytoplasm. The enzyme catalyses L-seryl-[protein] + ATP = O-phospho-L-seryl-[protein] + ADP + H(+). The catalysed reaction is L-threonyl-[protein] + ATP = O-phospho-L-threonyl-[protein] + ADP + H(+). Activated in response to hyperosmotic stress: cell shrinkage promotes formation of a membraneless compartment that concentrates wnk-1 with its downstrem substrates. Activation requires autophosphorylation. Autophosphorylation and subsequent activation is inhibited by increases in intracellular Cl(-) or K(+). Its function is as follows. Serine/threonine-protein kinase component of the WNK-SPAK/OSR1 kinase cascade, which plays an important role in the regulation of electrolyte homeostasis and regulatory volume increase in response to hyperosmotic stress. Wnk mediates regulatory volume increase in response to hyperosmotic stress by acting as a molecular crowding sensor, which senses cell shrinkage and mediates formation of a membraneless compartment by undergoing liquid-liquid phase separation. The membraneless compartment concentrates Wnk with its substrate Fray, promoting Wnk-dependent phosphorylation and activation of downstream kinase Fray. Following activation, Fray catalyzes phosphorylation of ion cotransporters Ncc69 and Irk1, regulating their activity. Phosphorylation of Na-K-Cl cotransporter Ncc69 promotes its activation and ion influx. Involved in circadian rhythms in small ventral lateral (sLNv) pacemaker neurons: in the morning, Wnk activity is repressed by high levels of intracellular chloride; in contrast Wnk activation in the evening promotes the activation of the inwardly rectifying potassium channel Irk1 via Fray. Acts as a positive regulator of the canonical Wnt signaling pathway during wing disk development. This chain is Serine/threonine-protein kinase Wnk, found in Drosophila melanogaster (Fruit fly).